Consider the following 99-residue polypeptide: Biogenesis of lysosome-related organelles complex 1 subunit SNN1 (99 aa).

Residues 34–94 (SINELRESQA…VVLKRYEKMV (61 aa)) adopt a coiled-coil conformation.

It belongs to the SNAPIN family. As to quaternary structure, component of the biogenesis of lysosome-related organelles complex-1 (BLOC-1).

It localises to the endosome. Functionally, component of the biogenesis of lysosome-related organelles complex-1 (BLOC-1), a complex involved in endosomal cargo sorting. The polypeptide is Biogenesis of lysosome-related organelles complex 1 subunit SNN1 (SNN1) (Kluyveromyces lactis (strain ATCC 8585 / CBS 2359 / DSM 70799 / NBRC 1267 / NRRL Y-1140 / WM37) (Yeast)).